A 203-amino-acid chain; its full sequence is Eukaryotic translation initiation factor isoform 4E (203 aa).

Residues 1–25 are compositionally biased toward low complexity; sequence MATETAGAVVESSSAATVPSPAPEA. The disordered stretch occupies residues 1–27; sequence MATETAGAVVESSSAATVPSPAPEAGS. Residues 47–52, Lys79, and 97–98 contribute to the mRNA site; these read QGAAWG and WE. A disulfide bridge links Cys102 with Cys141. 148–153 is a binding site for mRNA; the sequence is RQRQDK.

The protein belongs to the eukaryotic initiation factor 4E family. In terms of assembly, EIF4F is a multi-subunit complex, the composition of which varies with external and internal environmental conditions. It is composed of at least EIF4A, EIF4E and EIF4G. EIF4E is also known to interact with other partners. In higher plants two isoforms of EIF4F have been identified, named isoform EIF4F and isoform EIF(iso)4F. Isoform EIF4F has subunits p220 and p26, whereas isoform EIF(iso)4F has subunits p82 and p28. As to quaternary structure, (Microbial infection) Interacts with the potyvirus peanut stripe virus (PStV) helper component proteinase (HC-Pro) in the cytoplasm and with PStV viral genome-linked protein (VPg) in the nucleus; these interactions are possible in susceptible hosts but impaired in resistant plants. According to the redox status, the Cys-102-Cys-141 disulfide bridge may have a role in regulating protein function by affecting its ability to bind capped mRNA. As to expression, expressed ubiquitously with highest levels in young leaves and roots, and lowest levels in flowers.

It localises to the cytoplasm. Its subcellular location is the nucleus. In terms of biological role, component of the protein complex eIF4F, which is involved in the recognition of the mRNA cap, ATP-dependent unwinding of 5'-terminal secondary structure and recruitment of mRNA to the ribosome. Recognizes and binds the 7-methylguanosine-containing mRNA cap during an early step in the initiation of protein synthesis and facilitates ribosome binding by inducing the unwinding of the mRNAs secondary structures. Key component of recessive resistance to potyviruses such as peanut stripe virus (PStV). (Microbial infection) Susceptibility host factor required for viral infection by recruiting viral RNAs to the host ribosomal complex via an interaction with viral genome-linked protein (VPg). The chain is Eukaryotic translation initiation factor isoform 4E from Arachis hypogaea (Peanut).